Consider the following 1080-residue polypeptide: Carbamoyl phosphate synthase large chain (1080 aa).

The tract at residues methionine 1–glutamate 403 is carboxyphosphate synthetic domain. ATP-binding residues include arginine 129, arginine 169, glycine 175, glycine 176, glutamate 208, valine 210, glutamate 215, glycine 241, valine 242, histidine 243, glutamine 285, and glutamate 299. An ATP-grasp 1 domain is found at arginine 133–valine 328. Mg(2+)-binding residues include glutamine 285, glutamate 299, and asparagine 301. Residues glutamine 285, glutamate 299, and asparagine 301 each coordinate Mn(2+). The tract at residues threonine 404 to alanine 554 is oligomerization domain. Positions alanine 555–aspartate 942 are carbamoyl phosphate synthetic domain. In terms of domain architecture, ATP-grasp 2 spans glutamine 679 to threonine 876. ATP contacts are provided by arginine 715, arginine 754, leucine 756, glutamate 761, glycine 787, valine 788, histidine 789, serine 790, glutamine 830, and glutamate 847. Residues glutamine 830, glutamate 847, and asparagine 849 each coordinate Mg(2+). Mn(2+)-binding residues include glutamine 830, glutamate 847, and asparagine 849. An MGS-like domain is found at isoleucine 943–valine 1080. The interval isoleucine 943–valine 1080 is allosteric domain.

Belongs to the CarB family. Composed of two chains; the small (or glutamine) chain promotes the hydrolysis of glutamine to ammonia, which is used by the large (or ammonia) chain to synthesize carbamoyl phosphate. Tetramer of heterodimers (alpha,beta)4. The cofactor is Mg(2+). Mn(2+) is required as a cofactor.

It carries out the reaction hydrogencarbonate + L-glutamine + 2 ATP + H2O = carbamoyl phosphate + L-glutamate + 2 ADP + phosphate + 2 H(+). It catalyses the reaction hydrogencarbonate + NH4(+) + 2 ATP = carbamoyl phosphate + 2 ADP + phosphate + 2 H(+). Its pathway is amino-acid biosynthesis; L-arginine biosynthesis; carbamoyl phosphate from bicarbonate: step 1/1. The protein operates within pyrimidine metabolism; UMP biosynthesis via de novo pathway; (S)-dihydroorotate from bicarbonate: step 1/3. Its function is as follows. Large subunit of the glutamine-dependent carbamoyl phosphate synthetase (CPSase). CPSase catalyzes the formation of carbamoyl phosphate from the ammonia moiety of glutamine, carbonate, and phosphate donated by ATP, constituting the first step of 2 biosynthetic pathways, one leading to arginine and/or urea and the other to pyrimidine nucleotides. The large subunit (synthetase) binds the substrates ammonia (free or transferred from glutamine from the small subunit), hydrogencarbonate and ATP and carries out an ATP-coupled ligase reaction, activating hydrogencarbonate by forming carboxy phosphate which reacts with ammonia to form carbamoyl phosphate. This chain is Carbamoyl phosphate synthase large chain, found in Xylella fastidiosa (strain 9a5c).